We begin with the raw amino-acid sequence, 146 residues long: Large ribosomal subunit protein uL15 (146 aa).

Over residues 1–13 (MKLHELKPAEGSR) the composition is skewed to basic and acidic residues. A disordered region spans residues 1 to 60 (MKLHELKPAEGSRKQRNRVGRGIGSGNGKTAGKGHKGQNARSGGGVRPGFEGGQNPLFRR). Composition is skewed to gly residues over residues 21–31 (RGIGSGNGKTA) and 42–52 (SGGGVRPGFEG).

The protein belongs to the universal ribosomal protein uL15 family. Part of the 50S ribosomal subunit.

Its function is as follows. Binds to the 23S rRNA. The chain is Large ribosomal subunit protein uL15 from Lysinibacillus sphaericus (strain C3-41).